We begin with the raw amino-acid sequence, 380 residues long: 4-hydroxy-tetrahydrodipicolinate synthase, chloroplastic (380 aa).

Positions 1–44 (MISPTNLLPARKITPVSNGGAATASPSSPSVAARPRRLPSGLQS) are disordered. Residues 1–54 (MISPTNLLPARKITPVSNGGAATASPSSPSVAARPRRLPSGLQSVTGRGKVSLA) constitute a chloroplast transit peptide. A compositionally biased stretch (low complexity) spans 21-33 (AATASPSSPSVAA). Position 123 (T123) interacts with pyruvate. Catalysis depends on Y209, which acts as the Proton donor/acceptor. The active-site Schiff-base intermediate with substrate is the K237. Residue I276 participates in pyruvate binding.

It belongs to the DapA family. Tetramer of modified subunits derived from two genes in different combinations.

It localises to the plastid. The protein localises to the chloroplast. The enzyme catalyses L-aspartate 4-semialdehyde + pyruvate = (2S,4S)-4-hydroxy-2,3,4,5-tetrahydrodipicolinate + H2O + H(+). The protein operates within amino-acid biosynthesis; L-lysine biosynthesis via DAP pathway; (S)-tetrahydrodipicolinate from L-aspartate: step 3/4. Its activity is regulated as follows. Sensitive to lysine inhibition. This inhibition increase in an allosteric manner with increasing concentration of the inhibitor. Catalyzes the condensation of (S)-aspartate-beta-semialdehyde [(S)-ASA] and pyruvate to 4-hydroxy-tetrahydrodipicolinate (HTPA). In Zea mays (Maize), this protein is 4-hydroxy-tetrahydrodipicolinate synthase, chloroplastic.